Here is a 912-residue protein sequence, read N- to C-terminus: MASAPVLQPSPKRTVASHVPFADLCSTLERIQTCKSRPEKTKYFKDFLDSWRKFHSALHQKEKDVTDSFYPAMRLILPQLERERMAYGIKETMLAKLYIELLNLPKDGKDAVKLLNYRTPTGSRGDAGDFAMIAYFVLKPRSPKRGRLTVEQVNELLDAIANNNAAKNKGLVKKSLLQLITQSTALEQKWLIRMIIKDLKLGVSQQTIFSIFHPDAAELHNVTTDLEKVCRQLHDPSVSLSDVSIMLFSAFKPMLAAIADVQQIEKQMNNQVFYIETKLDGERMQMHKDGDVYKYFSRNGFDYTQQFGASPVDGSLTPFIHNVFKSDIQNCILDGEMMAYNPETQTFMQKGNKFDIKRMVEDSDLQTCFCVFDVLMINDQKLAHESLSKRYKILSNVFTPLTGRIHVVHKKSARTRKEVIDALNEAIDNREEGIMVKDPMSTYKPDKRGEGWLKIKPEYVNGLMDELDLLIVGGYWGKGSRGGMMSHFLCAVAETPAPNEKPTVFHSICRVGSGYTMKELYDLGLKLAKHWKPYNRKDPPCNILCGTEKPEMYIEPCNSVIVQIKAAEIVNSDMYKTDCTLRFPRIEKIREDKEWYECMTLDMLEHLRSRAEGKLASKHLYIDEYDEPQEKKRRTVPKVKKVIGIAEQFKAPDLSNVNKVSSMFEDVEFCVMTGMGRYSKSELESRIAECGGSVVQNPGPDTYCVIVGAENVRVKNIIASNKYDVVKAEWLLQCFQSKMLVPWQPAFMIHMSPETREHFAREYDCYGDSYTADTDVAQLKEVFSRVKDNKKMPLDLIAELEERYSWNSCKLCIFRGNTIYVDYYAIINKPSTKIHGTRLSIRALELRFYGAKVVPLLEEGVSHVVIGEDHSRVKEMKALRRMFGKKFKIVSELWVTESVKEGVPKNETQFLI.

Residues Glu276, Thr277, Lys278, Leu279, Arg283, Glu336, Lys350, Phe372, Glu432, Lys437, Lys454, and Lys456 each contribute to the ATP site. Residue Lys278 is the N6-AMP-lysine intermediate of the active site. Glu336 is a Mg(2+) binding site. Glu432 is a binding site for Mg(2+). Positions Leu615–Tyr625 are required for catalytic activity. BRCT domains follow at residues Lys659–Met748 and Cys809–Ile912.

This sequence belongs to the ATP-dependent DNA ligase family. Interacts with XRCC4; the LIG4-XRCC4 subcomplex has a 1:2 stoichiometry. Component of the core long-range non-homologous end joining (NHEJ) complex (also named DNA-PK complex) composed of PRKDC, LIG4, XRCC4, XRCC6/Ku70, XRCC5/Ku86 and NHEJ1/XLF. Additional component of the NHEJ complex includes PAXX. Following autophosphorylation, PRKDC dissociates from DNA, leading to formation of the short-range NHEJ complex, composed of LIG4, XRCC4, XRCC6/Ku70, XRCC5/Ku86 and NHEJ1/XLF. Mg(2+) is required as a cofactor.

The protein resides in the nucleus. The catalysed reaction is ATP + (deoxyribonucleotide)n-3'-hydroxyl + 5'-phospho-(deoxyribonucleotide)m = (deoxyribonucleotide)n+m + AMP + diphosphate.. Functionally, DNA ligase involved in DNA non-homologous end joining (NHEJ); required for double-strand break (DSB) repair and V(D)J recombination. Catalyzes the NHEJ ligation step of the broken DNA during DSB repair by resealing the DNA breaks after the gap filling is completed. Joins single-strand breaks in a double-stranded polydeoxynucleotide in an ATP-dependent reaction. LIG4 is mechanistically flexible: it can ligate nicks as well as compatible DNA overhangs alone, while in the presence of XRCC4, it can ligate ends with 2-nucleotides (nt) microhomology and 1-nt gaps. Forms a subcomplex with XRCC4; the LIG4-XRCC4 subcomplex is responsible for the NHEJ ligation step and XRCC4 enhances the joining activity of LIG4. This chain is DNA ligase 4, found in Gallus gallus (Chicken).